The sequence spans 413 residues: Cardiolipin synthase B (413 aa).

2 PLD phosphodiesterase domains span residues 108–135 (IFRR…SAEH) and 285–312 (RRRP…DPLS). Catalysis depends on residues His113, Lys115, Asp120, His290, Lys292, and Asp297. Residues 388–413 (AQVPPPAQPEMETQDRVDPENTGVKP) are disordered.

Belongs to the phospholipase D family. Cardiolipin synthase subfamily. ClsB sub-subfamily.

It localises to the cell membrane. It carries out the reaction 2 a 1,2-diacyl-sn-glycero-3-phospho-(1'-sn-glycerol) = a cardiolipin + glycerol. In terms of biological role, catalyzes the phosphatidyl group transfer from one phosphatidylglycerol molecule to another to form cardiolipin (CL) (diphosphatidylglycerol) and glycerol. The polypeptide is Cardiolipin synthase B (Salmonella typhimurium (strain LT2 / SGSC1412 / ATCC 700720)).